A 570-amino-acid polypeptide reads, in one-letter code: MHMSEIMEMLIRRGFLWQSFEIYGGMAGFIDYAPLGNNLRRKIENIWRKYFVINERAAEIDTPTIGIEEVFIASGHATSFTDVAIECENCGRVYRADHYVKEKLGIEVDETVEAVKEVMEVYDLKCECGGRFKDPAPMNLMFSTTIGPGKGKKGYLRPETAQGMFVDFKRLANFFREKLPFGVAQIGRAYRNEISPRQGVIRLREFNQAELEFFVHPGEKKHPHFSLYAKDVVKLVDKFDSQHEITLEEAVEKGIIANQILAYFIGKTRRFLLEIGIKDEKLRFRQHKDVERAHYATDCWDAEVLTSYGWIEVVGIADRTNYDLKRHSKFSGEDLSVFVPYEEPVKVKRRKIVPILSKLGPEFRQKAKKVAEALEALNVEADLDEVEVEVDGEKVKVTKEFFEIQEVEEEVTGEKVIPHVIEPSFGLDRITYSVLEHAFDKDVVDGEERRVLRLKRWVSPIEVAVLPLLSREPFESKGMEIVQMLREEGIFTDYDDSGSIGRRYRRFDEIGTPFCVTVDHQTFEDETVTIRDRDTTAQVRVKLGELPSILKELLRSEKDITEFGEVFRQV.

Residues R95 and E159 each coordinate substrate. ATP-binding positions include 191–193 (RNE), 201–206 (IRLREF), 312–313 (EV), and 426–429 (GLDR). 206-210 (FNQAE) is a binding site for substrate. Position 422–426 (422–426 (EPSFG)) interacts with substrate.

This sequence belongs to the class-II aminoacyl-tRNA synthetase family.

It is found in the cytoplasm. It carries out the reaction tRNA(Gly) + glycine + ATP = glycyl-tRNA(Gly) + AMP + diphosphate. Its function is as follows. Catalyzes the attachment of glycine to tRNA(Gly). In Archaeoglobus fulgidus (strain ATCC 49558 / DSM 4304 / JCM 9628 / NBRC 100126 / VC-16), this protein is Glycine--tRNA ligase.